The following is a 253-amino-acid chain: Adapter protein MecA (253 aa).

It belongs to the MecA family. In terms of assembly, homodimer.

In terms of biological role, enables the recognition and targeting of unfolded and aggregated proteins to the ClpC protease or to other proteins involved in proteolysis. The polypeptide is Adapter protein MecA (Streptococcus pyogenes serotype M6 (strain ATCC BAA-946 / MGAS10394)).